Consider the following 760-residue polypeptide: UDP-N-acetylmuramoyl-L-alanyl-D-glutamate--2,6-diaminopimelate ligase MurE homolog, chloroplastic (760 aa).

A chloroplast-targeting transit peptide spans 1-59; that stretch reads MATAPLAFRLPFPFSFPSASRPPPSRILAPPTPRRLPLRLAAAAARRFRPPTADDEPPE. 2 disordered regions span residues 13 to 159 and 176 to 205; these read PFSF…TDEL and LSVVSVADEEDEEVEGGEDEDDGLPLDEDG. Residues 20–34 show a composition bias toward pro residues; that stretch reads SRPPPSRILAPPTPR. Positions 53–62 are enriched in acidic residues; sequence ADDEPPEAAE. Over residues 118–132 the composition is skewed to basic and acidic residues; it reads EIDRAIAEKREEFTR. Acidic residues-rich tracts occupy residues 150–159 and 182–205; these read PEDEDLTDEL and ADEEDEEVEGGEDEDDGLPLDEDG.

This sequence belongs to the MurCDEF family. MurE subfamily. Component of the plastid-encoded plastid RNA polymerase (PEP) complex.

It is found in the plastid. The protein resides in the chloroplast. In terms of biological role, required for the activity of the plastid-encoded RNA polymerase (PEP) and full expression of genes transcribed by PEP. Required for the proper build-up and formation of the PEP-complex. The polypeptide is UDP-N-acetylmuramoyl-L-alanyl-D-glutamate--2,6-diaminopimelate ligase MurE homolog, chloroplastic (Zea mays (Maize)).